The following is a 964-amino-acid chain: Protein translocase subunit SecA (964 aa).

Residues Gln86, 104–108, and Asp494 contribute to the ATP site; that span reads GEGKT. A disordered region spans residues 848 to 964; sequence AESADTIAVA…YKMCHGQNEK (117 aa). The span at 871–882 shows a compositional bias: acidic residues; sequence AEGEVEEEDEDT. Residues 889-900 show a composition bias toward low complexity; it reads AESAAASGAGES. Zn(2+) is bound by residues Cys947, Cys949, Cys958, and His959.

The protein belongs to the SecA family. As to quaternary structure, monomer and homodimer. Part of the essential Sec protein translocation apparatus which comprises SecA, SecYEG and auxiliary proteins SecDF. Other proteins may also be involved. The cofactor is Zn(2+).

It localises to the cell membrane. Its subcellular location is the cytoplasm. It carries out the reaction ATP + H2O + cellular proteinSide 1 = ADP + phosphate + cellular proteinSide 2.. Part of the Sec protein translocase complex. Interacts with the SecYEG preprotein conducting channel. Has a central role in coupling the hydrolysis of ATP to the transfer of proteins into and across the cell membrane, serving as an ATP-driven molecular motor driving the stepwise translocation of polypeptide chains across the membrane. This chain is Protein translocase subunit SecA, found in Bifidobacterium longum (strain DJO10A).